The primary structure comprises 754 residues: 5-methyltetrahydropteroyltriglutamate--homocysteine methyltransferase (754 aa).

5-methyltetrahydropteroyltri-L-glutamate is bound by residues 17 to 20 (RELK) and Lys-117. Residues 431–433 (IGS) and Glu-484 contribute to the L-homocysteine site. Residues 431-433 (IGS) and Glu-484 contribute to the L-methionine site. 5-methyltetrahydropteroyltri-L-glutamate-binding positions include 515-516 (RC) and Trp-561. Residue Asp-599 coordinates L-homocysteine. Residue Asp-599 coordinates L-methionine. Glu-605 is a binding site for 5-methyltetrahydropteroyltri-L-glutamate. His-641, Cys-643, and Glu-665 together coordinate Zn(2+). His-694 functions as the Proton donor in the catalytic mechanism. A Zn(2+)-binding site is contributed by Cys-726.

Belongs to the vitamin-B12 independent methionine synthase family. Zn(2+) serves as cofactor.

The catalysed reaction is 5-methyltetrahydropteroyltri-L-glutamate + L-homocysteine = tetrahydropteroyltri-L-glutamate + L-methionine. The protein operates within amino-acid biosynthesis; L-methionine biosynthesis via de novo pathway; L-methionine from L-homocysteine (MetE route): step 1/1. Catalyzes the transfer of a methyl group from 5-methyltetrahydrofolate to homocysteine resulting in methionine formation. The chain is 5-methyltetrahydropteroyltriglutamate--homocysteine methyltransferase from Pectobacterium atrosepticum (strain SCRI 1043 / ATCC BAA-672) (Erwinia carotovora subsp. atroseptica).